The sequence spans 139 residues: Large ribosomal subunit protein uL16 (139 aa).

Basic residues predominate over residues 1 to 20 (MLMPRRVKHRKQHHPTRRGA). Positions 1–24 (MLMPRRVKHRKQHHPTRRGAAKGG) are disordered.

Belongs to the universal ribosomal protein uL16 family. In terms of assembly, part of the 50S ribosomal subunit.

Functionally, binds 23S rRNA and is also seen to make contacts with the A and possibly P site tRNAs. The chain is Large ribosomal subunit protein uL16 from Nocardioides sp. (strain ATCC BAA-499 / JS614).